The chain runs to 739 residues: Cleavage and polyadenylation specificity factor subunit 2 (739 aa).

The segment covering 411–423 (VKEEETKASHGSD) has biased composition (basic and acidic residues). A disordered region spans residues 411–430 (VKEEETKASHGSDDNSSEPM).

It belongs to the metallo-beta-lactamase superfamily. RNA-metabolizing metallo-beta-lactamase-like family. CPSF2/YSH1 subfamily. As to quaternary structure, component of the CPSF complex, at least composed of CPSF160, CPSF100, CPSF73-I, CPSF73-II, CPSF30, FY and FIPS5. Forms a complex with cleavage and polyadenylation specificity factor (CPSF) subunits FY, PAPS2, CSTF50, CPSF30, CPSF73-I, CPSF73-II and CPSF160.

Its subcellular location is the nucleus. The protein resides in the cytoplasm. Functionally, CPSF plays a key role in pre-mRNA 3'-end formation, recognizing the AAUAAA signal sequence and interacting with poly(A)polymerase and other factors to bring about cleavage and poly(A) addition. Required for antisense-RNA-mediated gene silencing. The chain is Cleavage and polyadenylation specificity factor subunit 2 (CPSF100) from Arabidopsis thaliana (Mouse-ear cress).